The sequence spans 1176 residues: Leucine--tRNA ligase, cytoplasmic (1176 aa).

Tyr-52 and Tyr-54 together coordinate L-leucine. The 'HIGH' region signature appears at 60–63 (HLGH). Residues 115–142 (PDFPDEEDEEEETNVKTEDTRIKDKAKG) form a disordered region. Residues 117 to 126 (FPDEEDEEEE) are compositionally biased toward acidic residues. A compositionally biased stretch (basic and acidic residues) spans 127 to 139 (TNVKTEDTRIKDK). Ser-167 carries the post-translational modification Phosphoserine. Residues 260 to 509 (GPQEYTLLKL…DAGDALIYME (250 aa)) form an editing domain region. Positions 594 and 597 each coordinate L-leucine. A 'KMSKS' region motif is present at residues 716–720 (KMSKS). An ATP-binding site is contributed by Lys-719. Phosphoserine is present on Ser-720. N6-acetyllysine is present on residues Lys-970 and Lys-1047.

Belongs to the class-I aminoacyl-tRNA synthetase family.

The protein resides in the cytoplasm. It catalyses the reaction tRNA(Leu) + L-leucine + ATP = L-leucyl-tRNA(Leu) + AMP + diphosphate. The enzyme catalyses L-methionyl-tRNA(Leu) + H2O = tRNA(Leu) + L-methionine + H(+). Its activity is regulated as follows. 5-fluoro-1,3-dihydro-1-hydroxy-1,2-benzoxaborole inhibits LARS1 by forming a covalent adduct with the 3' adenosine of tRNA(Leu) at the editing site, thus locking the enzyme in an inactive conformation. In terms of biological role, aminoacyl-tRNA synthetase that catalyzes the specific attachment of leucine to its cognate tRNA (tRNA(Leu)). It performs tRNA aminoacylation in a two-step reaction: Leu is initially activated by ATP to form a leucyl-adenylate (Leu-AMP) intermediate; then the leucyl moiety is transferred to the acceptor 3' end of the tRNA to yield leucyl-tRNA. To improve the fidelity of catalytic reactions, it is also able to hydrolyze misactivated aminoacyl-adenylate intermediates (pre-transfer editing) and mischarged aminoacyl-tRNAs (post-transfer editing). The polypeptide is Leucine--tRNA ligase, cytoplasmic (LARS1) (Pongo abelii (Sumatran orangutan)).